Here is a 405-residue protein sequence, read N- to C-terminus: 4-hydroxy-3-methylbut-2-enyl diphosphate reductase (405 aa).

C66 is a binding site for [4Fe-4S] cluster. H96 lines the (2E)-4-hydroxy-3-methylbut-2-enyl diphosphate pocket. H96 serves as a coordination point for dimethylallyl diphosphate. Position 96 (H96) interacts with isopentenyl diphosphate. C157 contributes to the [4Fe-4S] cluster binding site. H185 provides a ligand contact to (2E)-4-hydroxy-3-methylbut-2-enyl diphosphate. A dimethylallyl diphosphate-binding site is contributed by H185. Residue H185 participates in isopentenyl diphosphate binding. The Proton donor role is filled by E187. T250 lines the (2E)-4-hydroxy-3-methylbut-2-enyl diphosphate pocket. C288 is a [4Fe-4S] cluster binding site. (2E)-4-hydroxy-3-methylbut-2-enyl diphosphate is bound by residues S317, S318, N319, and S380. Dimethylallyl diphosphate is bound by residues S317, S318, N319, and S380. Residues S317, S318, N319, and S380 each contribute to the isopentenyl diphosphate site.

Belongs to the IspH family. [4Fe-4S] cluster serves as cofactor.

The enzyme catalyses isopentenyl diphosphate + 2 oxidized [2Fe-2S]-[ferredoxin] + H2O = (2E)-4-hydroxy-3-methylbut-2-enyl diphosphate + 2 reduced [2Fe-2S]-[ferredoxin] + 2 H(+). The catalysed reaction is dimethylallyl diphosphate + 2 oxidized [2Fe-2S]-[ferredoxin] + H2O = (2E)-4-hydroxy-3-methylbut-2-enyl diphosphate + 2 reduced [2Fe-2S]-[ferredoxin] + 2 H(+). It functions in the pathway isoprenoid biosynthesis; dimethylallyl diphosphate biosynthesis; dimethylallyl diphosphate from (2E)-4-hydroxy-3-methylbutenyl diphosphate: step 1/1. It participates in isoprenoid biosynthesis; isopentenyl diphosphate biosynthesis via DXP pathway; isopentenyl diphosphate from 1-deoxy-D-xylulose 5-phosphate: step 6/6. In terms of biological role, catalyzes the conversion of 1-hydroxy-2-methyl-2-(E)-butenyl 4-diphosphate (HMBPP) into a mixture of isopentenyl diphosphate (IPP) and dimethylallyl diphosphate (DMAPP). Acts in the terminal step of the DOXP/MEP pathway for isoprenoid precursor biosynthesis. This is 4-hydroxy-3-methylbut-2-enyl diphosphate reductase from Prochlorococcus marinus (strain SARG / CCMP1375 / SS120).